The sequence spans 257 residues: Phosphonates import ATP-binding protein PhnC (257 aa).

An ABC transporter domain is found at 2–246 (IEFRNVSKVY…KFAEIYGDVA (245 aa)). 35–42 (GLSGAGKS) lines the ATP pocket.

It belongs to the ABC transporter superfamily. Phosphonates importer (TC 3.A.1.9.1) family. In terms of assembly, the complex is composed of two ATP-binding proteins (PhnC), two transmembrane proteins (PhnE) and a solute-binding protein (PhnD).

It is found in the cell membrane. It carries out the reaction phosphonate(out) + ATP + H2O = phosphonate(in) + ADP + phosphate + H(+). Functionally, part of the ABC transporter complex PhnCDE involved in phosphonates import. Responsible for energy coupling to the transport system. In Bacillus cereus (strain ZK / E33L), this protein is Phosphonates import ATP-binding protein PhnC.